Consider the following 247-residue polypeptide: 2,3-bisphosphoglycerate-dependent phosphoglycerate mutase (247 aa).

Residues 8-15 (RHGESQWN), 21-22 (TG), Arg-60, 87-90 (ERHY), Lys-98, 114-115 (RR), and 183-184 (GN) each bind substrate. His-9 functions as the Tele-phosphohistidine intermediate in the catalytic mechanism. The active-site Proton donor/acceptor is the Glu-87.

The protein belongs to the phosphoglycerate mutase family. BPG-dependent PGAM subfamily.

It catalyses the reaction (2R)-2-phosphoglycerate = (2R)-3-phosphoglycerate. It functions in the pathway carbohydrate degradation; glycolysis; pyruvate from D-glyceraldehyde 3-phosphate: step 3/5. Functionally, catalyzes the interconversion of 2-phosphoglycerate and 3-phosphoglycerate. The chain is 2,3-bisphosphoglycerate-dependent phosphoglycerate mutase from Chlorobium phaeobacteroides (strain DSM 266 / SMG 266 / 2430).